The sequence spans 845 residues: Molybdenum cofactor sulfurase (845 aa).

Lys-240 carries the N6-(pyridoxal phosphate)lysine modification. Cys-404 is an active-site residue. An MOSC domain is found at 666-840 (SFPQDSSPSS…LMVGDTVTPS (175 aa)).

It belongs to the class-V pyridoxal-phosphate-dependent aminotransferase family. MOCOS subfamily. Pyridoxal 5'-phosphate serves as cofactor.

The enzyme catalyses Mo-molybdopterin + L-cysteine + AH2 = thio-Mo-molybdopterin + L-alanine + A + H2O. It participates in cofactor biosynthesis; molybdopterin biosynthesis. Functionally, sulfurates the molybdenum cofactor. Sulfation of molybdenum is essential for xanthine dehydrogenase (XDH) and aldehyde oxidase (ADO) enzymes in which molybdenum cofactor is liganded by 1 oxygen and 1 sulfur atom in active form. The sequence is that of Molybdenum cofactor sulfurase from Aspergillus clavatus (strain ATCC 1007 / CBS 513.65 / DSM 816 / NCTC 3887 / NRRL 1 / QM 1276 / 107).